A 446-amino-acid chain; its full sequence is ATP-dependent protease ATPase subunit HslU (446 aa).

Residues Ile17, 59–64, Asp255, Glu320, and Arg392 contribute to the ATP site; that span reads GVGKTE.

The protein belongs to the ClpX chaperone family. HslU subfamily. In terms of assembly, a double ring-shaped homohexamer of HslV is capped on each side by a ring-shaped HslU homohexamer. The assembly of the HslU/HslV complex is dependent on binding of ATP.

It localises to the cytoplasm. Its function is as follows. ATPase subunit of a proteasome-like degradation complex; this subunit has chaperone activity. The binding of ATP and its subsequent hydrolysis by HslU are essential for unfolding of protein substrates subsequently hydrolyzed by HslV. HslU recognizes the N-terminal part of its protein substrates and unfolds these before they are guided to HslV for hydrolysis. This is ATP-dependent protease ATPase subunit HslU from Pseudomonas fluorescens (strain ATCC BAA-477 / NRRL B-23932 / Pf-5).